The primary structure comprises 642 residues: Serine/threonine-protein kinase pakA (642 aa).

2 stretches are compositionally biased toward polar residues: residues 1-12 and 38-48; these read MSLKKQQQQSDF and LRQSASFTALN. The disordered stretch occupies residues 1 to 82; it reads MSLKKQQQQS…GFGTKPRRKN (82 aa). The CRIB domain occupies 100–113; the sequence is ISAPENPVHVTHVG. Disordered regions lie at residues 180–276 and 317–338; these read GEYP…PIPE and QLDR…RTRQ. Low complexity-rich tracts occupy residues 217–227 and 254–266; these read SQSSPVPVLSS and VVSN…RPAN. In terms of domain architecture, Protein kinase spans 361 to 612; the sequence is YYNLNKIGQG…AHDLLKHPFM (252 aa). Residues 367 to 375 and Lys-390 each bind ATP; that span reads IGQGASGGV. Asp-480 acts as the Proton acceptor in catalysis.

It belongs to the protein kinase superfamily. STE Ser/Thr protein kinase family. STE20 subfamily.

It localises to the cytoplasm. It is found in the nucleus. The enzyme catalyses L-seryl-[protein] + ATP = O-phospho-L-seryl-[protein] + ADP + H(+). It catalyses the reaction L-threonyl-[protein] + ATP = O-phospho-L-threonyl-[protein] + ADP + H(+). Functionally, MAP4K component of the MAPK pathway required for the mating pheromone response and the regulation of cell polarity and cell cycle. In Talaromyces marneffei (Penicillium marneffei), this protein is Serine/threonine-protein kinase pakA (pakA).